A 159-amino-acid chain; its full sequence is Peripheral myelin protein 22 (159 aa).

Residue Met1 is a topological domain, cytoplasmic. A helical transmembrane segment spans residues 2-31; it reads LLLLLGIIVLHVAVLVLLFVATIVSQWIVG. Topologically, residues 32–64 are extracellular; it reads NGHATDLWQNCSTTSGNVQHCLSSSANEWLQSV. Residue Asn41 is glycosylated (N-linked (GlcNAc...) asparagine). The helical transmembrane segment at 65–91 threads the bilayer; the sequence is QATMILSIIFSVLSLFLFFCQLFTLTK. The Cytoplasmic portion of the chain corresponds to 92-95; it reads GGRF. A helical transmembrane segment spans residues 96–119; it reads YITGIFQILAGLCVMSAASIYTVR. The Extracellular portion of the chain corresponds to 120-133; it reads HPEWHLDSAYSYGF. Residues 134–156 traverse the membrane as a helical segment; sequence AYILAWVAFPLALLSGVVYVILR. Residues 157–159 lie on the Cytoplasmic side of the membrane; that stretch reads KRE.

Belongs to the PMP-22/EMP/MP20 family. Ubiquitinated by the DCX(DCAF13) E3 ubiquitin ligase complex, leading to its degradation.

It localises to the cell membrane. In terms of biological role, might be involved in growth regulation, and in myelinization in the peripheral nervous system. This is Peripheral myelin protein 22 (PMP22) from Equus caballus (Horse).